The sequence spans 110 residues: Nodulation protein NolE (110 aa).

Positions 1 to 25 are cleaved as a signal peptide; the sequence is MKVTGYYVIVAALLALALRAGPSLA. The tract at residues 27-64 is disordered; it reads DDRNQDCGPATSDPRANLNGADKAHSAEHTQDFNCQDT. The segment covering 48-57 has biased composition (basic and acidic residues); it reads DKAHSAEHTQ.

It is found in the periplasm. In Rhizobium leguminosarum bv. phaseoli, this protein is Nodulation protein NolE (nolE).